A 107-amino-acid chain; its full sequence is Iron-binding protein IscA (107 aa).

Fe cation is bound by residues Cys-35, Cys-99, and Cys-101.

It belongs to the HesB/IscA family. Homodimer; may form tetramers and higher multimers. Requires Fe cation as cofactor.

Functionally, is able to transfer iron-sulfur clusters to apo-ferredoxin. Multiple cycles of [2Fe2S] cluster formation and transfer are observed, suggesting that IscA acts catalytically. Recruits intracellular free iron so as to provide iron for the assembly of transient iron-sulfur cluster in IscU in the presence of IscS, L-cysteine and the thioredoxin reductase system TrxA/TrxB. The sequence is that of Iron-binding protein IscA from Cronobacter sakazakii (strain ATCC BAA-894) (Enterobacter sakazakii).